Reading from the N-terminus, the 180-residue chain is Shikimate kinase (180 aa).

Residue 14 to 19 (GAGKSC) participates in ATP binding. Ser-18 provides a ligand contact to Mg(2+). Asp-36, Arg-60, and Gly-82 together coordinate substrate. Arg-120 provides a ligand contact to ATP. Arg-139 lines the substrate pocket.

The protein belongs to the shikimate kinase family. In terms of assembly, monomer. Mg(2+) serves as cofactor.

Its subcellular location is the cytoplasm. The catalysed reaction is shikimate + ATP = 3-phosphoshikimate + ADP + H(+). The protein operates within metabolic intermediate biosynthesis; chorismate biosynthesis; chorismate from D-erythrose 4-phosphate and phosphoenolpyruvate: step 5/7. Functionally, catalyzes the specific phosphorylation of the 3-hydroxyl group of shikimic acid using ATP as a cosubstrate. The sequence is that of Shikimate kinase from Xanthomonas campestris pv. campestris (strain 8004).